A 273-amino-acid polypeptide reads, in one-letter code: Dermonecrotic toxin LruSicTox-alphaIC1d (273 aa).

The active site involves histidine 5. Residues glutamate 25 and aspartate 27 each contribute to the Mg(2+) site. Catalysis depends on histidine 41, which acts as the Nucleophile. Cystine bridges form between cysteine 45/cysteine 51 and cysteine 47/cysteine 190. Aspartate 85 lines the Mg(2+) pocket.

Belongs to the arthropod phospholipase D family. Class II subfamily. Mg(2+) serves as cofactor. As to expression, expressed by the venom gland.

Its subcellular location is the secreted. It catalyses the reaction an N-(acyl)-sphingosylphosphocholine = an N-(acyl)-sphingosyl-1,3-cyclic phosphate + choline. The enzyme catalyses an N-(acyl)-sphingosylphosphoethanolamine = an N-(acyl)-sphingosyl-1,3-cyclic phosphate + ethanolamine. The catalysed reaction is a 1-acyl-sn-glycero-3-phosphocholine = a 1-acyl-sn-glycero-2,3-cyclic phosphate + choline. It carries out the reaction a 1-acyl-sn-glycero-3-phosphoethanolamine = a 1-acyl-sn-glycero-2,3-cyclic phosphate + ethanolamine. In terms of biological role, dermonecrotic toxins cleave the phosphodiester linkage between the phosphate and headgroup of certain phospholipids (sphingolipid and lysolipid substrates), forming an alcohol (often choline) and a cyclic phosphate. This toxin acts on sphingomyelin (SM). It may also act on ceramide phosphoethanolamine (CPE), lysophosphatidylcholine (LPC) and lysophosphatidylethanolamine (LPE), but not on lysophosphatidylserine (LPS), and lysophosphatidylglycerol (LPG). It acts by transphosphatidylation, releasing exclusively cyclic phosphate products as second products. Induces dermonecrosis, hemolysis, increased vascular permeability, edema, inflammatory response, and platelet aggregation. The sequence is that of Dermonecrotic toxin LruSicTox-alphaIC1d from Loxosceles rufescens (Mediterranean recluse spider).